Consider the following 89-residue polypeptide: Cell division topological specificity factor (89 aa).

Belongs to the MinE family.

Its function is as follows. Prevents the cell division inhibition by proteins MinC and MinD at internal division sites while permitting inhibition at polar sites. This ensures cell division at the proper site by restricting the formation of a division septum at the midpoint of the long axis of the cell. The protein is Cell division topological specificity factor of Heliobacterium modesticaldum (strain ATCC 51547 / Ice1).